Reading from the N-terminus, the 82-residue chain is MENILGLVALACGLIVGLGAIGASIGIALMGGKFLESSARQPELINELQTKMFILAGLIDAAFLIGVAIALLFAFANPFVLA.

Helical transmembrane passes span 7-27 and 53-73; these read LVAL…SIGI and FILA…ALLF.

It belongs to the ATPase C chain family. As to quaternary structure, F-type ATPases have 2 components, F(1) - the catalytic core - and F(0) - the membrane proton channel. F(1) has five subunits: alpha(3), beta(3), gamma(1), delta(1), epsilon(1). F(0) has three main subunits: a(1), b(2) and c(10-14). The alpha and beta chains form an alternating ring which encloses part of the gamma chain. F(1) is attached to F(0) by a central stalk formed by the gamma and epsilon chains, while a peripheral stalk is formed by the delta and b chains.

The protein localises to the cell inner membrane. Its function is as follows. F(1)F(0) ATP synthase produces ATP from ADP in the presence of a proton or sodium gradient. F-type ATPases consist of two structural domains, F(1) containing the extramembraneous catalytic core and F(0) containing the membrane proton channel, linked together by a central stalk and a peripheral stalk. During catalysis, ATP synthesis in the catalytic domain of F(1) is coupled via a rotary mechanism of the central stalk subunits to proton translocation. Key component of the F(0) channel; it plays a direct role in translocation across the membrane. A homomeric c-ring of between 10-14 subunits forms the central stalk rotor element with the F(1) delta and epsilon subunits. In Acidovorax ebreus (strain TPSY) (Diaphorobacter sp. (strain TPSY)), this protein is ATP synthase subunit c.